The chain runs to 670 residues: MIPAVADPTTLDGGGARRPLLPETDPRGRAAAGAEQKRPPATPTVLTAVVSAVLLLVLVAVTVLASQHVDGQAGGVPAGEDAVVVEVAASRGVAEGVSEKSTAPLLGSGALQDFSWTNAMLAWQRTAFHFQPPKNWMNDPNGPLYHKGWYHLFYQWNPDSAVWGNITWGHAVSRDLLHWLHLPLAMVPDHPYDANGVWSGSATRLPDGRIVMLYTGSTAESSAQVQNLAEPADASDPLLREWVKSDANPVLVPPPGIGPTDFRDPTTACRTPAGNDTAWRVAIGSKDRDHAGLALVYRTEDFVRYDPAPALMHAVPGTGMWECVDFYPVAAGSGAAAGSGDGLETSAAPGPGVKHVLKASLDDDKHDYYAIGTYDPATDTWTPDSAEDDVGIGLRYDYGKYYASKTFYDPVLRRRVLWGWVGETDSERADILKGWASVQSIPRTVLLDTKTGSNLLQWPVVEVENLRMSGKSFDGVALDRGSVVPLDVGKATQLDIEAVFEVDASDAAGVTEADVTFNCSTSAGAAGRGLLGPFGLLVLADDDLSEQTAVYFYLLKGTDGSLQTFFCQDELRASKANDLVKRVYGSLVPVLDGENLSVRILVDHSIVESFAQGGRTCITSRVYPTRAIYDSARVFLFNNATHAHVKAKSVKIWQLNSAYIRPYPATTTSL.

The disordered stretch occupies residues 1–40 (MIPAVADPTTLDGGGARRPLLPETDPRGRAAAGAEQKRPP). Over 1 to 44 (MIPAVADPTTLDGGGARRPLLPETDPRGRAAAGAEQKRPPATPT) the chain is Cytoplasmic. The propeptide at 1 to 112 (MIPAVADPTT…APLLGSGALQ (112 aa)) is removed in mature form. Residues 45 to 65 (VLTAVVSAVLLLVLVAVTVLA) form a helical; Signal-anchor for type II membrane protein membrane-spanning segment. The Lumenal segment spans residues 66 to 670 (SQHVDGQAGG…RPYPATTTSL (605 aa)). Substrate contacts are provided by residues 136–139 (WMND), Q155, and W163. D139 is an active-site residue. A glycan (N-linked (GlcNAc...) asparagine) is linked at N165. Substrate contacts are provided by residues 198–199 (WS) and 263–264 (RD). N275 carries N-linked (GlcNAc...) asparagine glycosylation. The substrate site is built by E322 and D362. A glycan (N-linked (GlcNAc...) asparagine) is linked at N518. C519 and C567 form a disulfide bridge. N-linked (GlcNAc...) asparagine glycans are attached at residues N595 and N639.

Belongs to the glycosyl hydrolase 32 family. As to quaternary structure, may be present in two forms, a 70 kDa monomer and a heterodimer of the 30 kDa and 38 kDa subunits. The ratio of the levels of the two forms within cells appears to be regulated developmentally.

It localises to the membrane. It is found in the vacuole lumen. It catalyses the reaction Hydrolysis of terminal non-reducing beta-D-fructofuranoside residues in beta-D-fructofuranosides.. The protein operates within glycan biosynthesis; sucrose metabolism. The chain is Beta-fructofuranosidase 1 (IVR1) from Zea mays (Maize).